Consider the following 185-residue polypeptide: Large ribosomal subunit protein uL5 (185 aa).

The protein belongs to the universal ribosomal protein uL5 family. In terms of assembly, part of the 50S ribosomal subunit; part of the 5S rRNA/L5/L18/L25 subcomplex. Contacts the 5S rRNA and the P site tRNA. Forms a bridge to the 30S subunit in the 70S ribosome.

In terms of biological role, this is one of the proteins that bind and probably mediate the attachment of the 5S RNA into the large ribosomal subunit, where it forms part of the central protuberance. In the 70S ribosome it contacts protein S13 of the 30S subunit (bridge B1b), connecting the 2 subunits; this bridge is implicated in subunit movement. Contacts the P site tRNA; the 5S rRNA and some of its associated proteins might help stabilize positioning of ribosome-bound tRNAs. This chain is Large ribosomal subunit protein uL5, found in Rhodopseudomonas palustris (strain BisB18).